The chain runs to 206 residues: Ribosomal RNA small subunit methyltransferase G (206 aa).

S-adenosyl-L-methionine is bound by residues Gly74, Leu79, Val125–Glu126, and Arg140.

Belongs to the methyltransferase superfamily. RNA methyltransferase RsmG family.

It is found in the cytoplasm. The catalysed reaction is guanosine(527) in 16S rRNA + S-adenosyl-L-methionine = N(7)-methylguanosine(527) in 16S rRNA + S-adenosyl-L-homocysteine. In terms of biological role, specifically methylates the N7 position of guanine in position 527 of 16S rRNA. This Shewanella sp. (strain ANA-3) protein is Ribosomal RNA small subunit methyltransferase G.